The sequence spans 221 residues: Crossover junction endodeoxyribonuclease RuvC (221 aa).

Catalysis depends on residues Asp12, Glu73, and Asp146. Positions 12, 73, and 146 each coordinate Mg(2+). Positions 169 to 221 (SQYSEQELEKRRRVQQGKLGKAKSTYNAEQAQSHASDPAKAAHPSQFQRTDTN) are disordered. The span at 192–203 (STYNAEQAQSHA) shows a compositional bias: polar residues.

This sequence belongs to the RuvC family. Homodimer which binds Holliday junction (HJ) DNA. The HJ becomes 2-fold symmetrical on binding to RuvC with unstacked arms; it has a different conformation from HJ DNA in complex with RuvA. In the full resolvosome a probable DNA-RuvA(4)-RuvB(12)-RuvC(2) complex forms which resolves the HJ. The cofactor is Mg(2+).

Its subcellular location is the cytoplasm. The catalysed reaction is Endonucleolytic cleavage at a junction such as a reciprocal single-stranded crossover between two homologous DNA duplexes (Holliday junction).. Functionally, the RuvA-RuvB-RuvC complex processes Holliday junction (HJ) DNA during genetic recombination and DNA repair. Endonuclease that resolves HJ intermediates. Cleaves cruciform DNA by making single-stranded nicks across the HJ at symmetrical positions within the homologous arms, yielding a 5'-phosphate and a 3'-hydroxyl group; requires a central core of homology in the junction. The consensus cleavage sequence is 5'-(A/T)TT(C/G)-3'. Cleavage occurs on the 3'-side of the TT dinucleotide at the point of strand exchange. HJ branch migration catalyzed by RuvA-RuvB allows RuvC to scan DNA until it finds its consensus sequence, where it cleaves and resolves the cruciform DNA. This chain is Crossover junction endodeoxyribonuclease RuvC, found in Corynebacterium glutamicum (strain ATCC 13032 / DSM 20300 / JCM 1318 / BCRC 11384 / CCUG 27702 / LMG 3730 / NBRC 12168 / NCIMB 10025 / NRRL B-2784 / 534).